A 273-amino-acid chain; its full sequence is 4-hydroxy-tetrahydrodipicolinate reductase (273 aa).

NAD(+) is bound by residues 12-17 (GAGGRM) and E38. R39 contacts NADP(+). NAD(+) contacts are provided by residues 102-104 (GTT) and 126-129 (AANF). The active-site Proton donor/acceptor is H159. H160 serves as a coordination point for (S)-2,3,4,5-tetrahydrodipicolinate. K163 acts as the Proton donor in catalysis. Residue 169–170 (GT) coordinates (S)-2,3,4,5-tetrahydrodipicolinate.

It belongs to the DapB family. As to quaternary structure, homotetramer.

The protein resides in the cytoplasm. It catalyses the reaction (S)-2,3,4,5-tetrahydrodipicolinate + NAD(+) + H2O = (2S,4S)-4-hydroxy-2,3,4,5-tetrahydrodipicolinate + NADH + H(+). It carries out the reaction (S)-2,3,4,5-tetrahydrodipicolinate + NADP(+) + H2O = (2S,4S)-4-hydroxy-2,3,4,5-tetrahydrodipicolinate + NADPH + H(+). Its pathway is amino-acid biosynthesis; L-lysine biosynthesis via DAP pathway; (S)-tetrahydrodipicolinate from L-aspartate: step 4/4. In terms of biological role, catalyzes the conversion of 4-hydroxy-tetrahydrodipicolinate (HTPA) to tetrahydrodipicolinate. The protein is 4-hydroxy-tetrahydrodipicolinate reductase of Yersinia enterocolitica serotype O:8 / biotype 1B (strain NCTC 13174 / 8081).